Reading from the N-terminus, the 140-residue chain is uncharacterized protein (140 aa).

N-linked (GlcNAc...) asparagine glycosylation occurs at Asn-36. The chain crosses the membrane as a helical span at residues 91–107 (LFMSLIGLCVCYMNLVF). The span at 113–122 (QPSSSGSKGN) shows a compositional bias: polar residues. A disordered region spans residues 113-140 (QPSSSGSKGNTETTIETTTEVETETAKQ). The span at 131 to 140 (TEVETETAKQ) shows a compositional bias: acidic residues.

It localises to the endoplasmic reticulum membrane. This is an uncharacterized protein from Saccharomyces cerevisiae (strain ATCC 204508 / S288c) (Baker's yeast).